Here is a 901-residue protein sequence, read N- to C-terminus: ABC transporter A family member 8 (901 aa).

7 consecutive transmembrane segments (helical) span residues Leu-34–Thr-54, Ile-315–Ile-335, Phe-369–Leu-389, Val-402–Phe-422, Thr-427–Phe-447, Trp-460–Tyr-477, and Cys-508–Ile-528. In terms of domain architecture, ABC transporter spans Val-586–Thr-823. Gly-624–Thr-631 contributes to the ATP binding site.

The protein belongs to the ABC transporter superfamily. ABCA family. CPR flippase (TC 3.A.1.211) subfamily.

It is found in the membrane. The polypeptide is ABC transporter A family member 8 (ABCA8) (Arabidopsis thaliana (Mouse-ear cress)).